A 645-amino-acid polypeptide reads, in one-letter code: Protein disulfide-isomerase A4 (645 aa).

Residues 1-20 (MRPRKAFLLLLLLGLVQLLA) form the signal peptide. Thioredoxin domains lie at 21 to 169 (VAGA…EVSQ) and 158 to 301 (EEIV…EFLK). The interval 24–58 (AEGPDEDSSNRENAIEDEEEEEEEDDDEEEDDLEV) is disordered. Residues 38–58 (IEDEEEEEEEDDDEEEDDLEV) show a composition bias toward acidic residues. A CXXC motif is present at residues 91-94 (CGHC). 2 cysteine pairs are disulfide-bonded: Cys-91–Cys-94 and Cys-206–Cys-209. Residue Lys-366 is modified to N6-acetyllysine. The Thioredoxin 3 domain maps to 505 to 636 (FKKGKLKPVI…LSKFIEEHAT (132 aa)). Residues 555-558 (CGHC) carry the CXXC motif. A disulfide bridge links Cys-555 with Cys-558. The Prevents secretion from ER signature appears at 642-645 (KEEL).

Belongs to the protein disulfide isomerase family. Part of a large chaperone multiprotein complex comprising DNAJB11, HSP90B1, HSPA5, HYOU, PDIA2, PDIA4, PDIA6, PPIB, SDF2L1, UGGT1 and very small amounts of ERP29, but not, or at very low levels, CALR nor CANX. Component of a complex containing at least CRELD2, MANF, MATN3 and PDIA4. In terms of assembly, (Microbial infection) Interacts with Human astrovirus-1 and Human astrovirus-8 spike protein VP25; this interaction seems to facilitate the uncoating during virus entry into the cell. Does not interact with Human astrovirus-2 spike protein VP25.

The protein localises to the endoplasmic reticulum lumen. It is found in the melanosome. It carries out the reaction Catalyzes the rearrangement of -S-S- bonds in proteins.. This Homo sapiens (Human) protein is Protein disulfide-isomerase A4 (PDIA4).